The sequence spans 302 residues: D-alanine--D-alanine ligase B (302 aa).

In terms of domain architecture, ATP-grasp spans 99 to 294; it reads KKVLKAENIR…YSKFIDLIIE (196 aa). 126–181 is a binding site for ATP; sequence IEEIGYPVFVKPNNGGSSVATFKVYKKEDIKNSVMEGLKYDEEVIIESFIKGREIT. Mg(2+) is bound by residues Asp-248, Glu-261, and Asn-263.

This sequence belongs to the D-alanine--D-alanine ligase family. Mg(2+) serves as cofactor. The cofactor is Mn(2+).

The protein resides in the cytoplasm. The catalysed reaction is 2 D-alanine + ATP = D-alanyl-D-alanine + ADP + phosphate + H(+). The protein operates within cell wall biogenesis; peptidoglycan biosynthesis. Cell wall formation. The protein is D-alanine--D-alanine ligase B of Clostridium perfringens (strain 13 / Type A).